The chain runs to 276 residues: ARL14 effector protein (276 aa).

Positions 158–177 are disordered; the sequence is KQTEFAPEGGKREKRKLTKA. A Glycyl lysine isopeptide (Lys-Gly) (interchain with G-Cter in SUMO2) cross-link involves residue lysine 176. A phosphoserine mark is found at serine 182 and serine 266.

Interacts with ARL14 and MYO1E.

The protein localises to the cytoplasm. In terms of biological role, through its interaction with ARL14 and MYO1E, may connect MHC class II-containing cytoplasmic vesicles to the actin network and hence controls the movement of these vesicles along the actin cytoskeleton in dendritic cells. In Mus musculus (Mouse), this protein is ARL14 effector protein (Arl14ep).